Reading from the N-terminus, the 249-residue chain is 1-(5-phosphoribosyl)-5-[(5-phosphoribosylamino)methylideneamino] imidazole-4-carboxamide isomerase (249 aa).

The active-site Proton acceptor is the aspartate 8. Catalysis depends on aspartate 129, which acts as the Proton donor.

The protein belongs to the HisA/HisF family.

The protein resides in the cytoplasm. It carries out the reaction 1-(5-phospho-beta-D-ribosyl)-5-[(5-phospho-beta-D-ribosylamino)methylideneamino]imidazole-4-carboxamide = 5-[(5-phospho-1-deoxy-D-ribulos-1-ylimino)methylamino]-1-(5-phospho-beta-D-ribosyl)imidazole-4-carboxamide. It functions in the pathway amino-acid biosynthesis; L-histidine biosynthesis; L-histidine from 5-phospho-alpha-D-ribose 1-diphosphate: step 4/9. This chain is 1-(5-phosphoribosyl)-5-[(5-phosphoribosylamino)methylideneamino] imidazole-4-carboxamide isomerase, found in Nitratidesulfovibrio vulgaris (strain ATCC 29579 / DSM 644 / CCUG 34227 / NCIMB 8303 / VKM B-1760 / Hildenborough) (Desulfovibrio vulgaris).